The following is a 200-amino-acid chain: MELMVKGAAALTVSETTFGREFNEALVHQVVVAYAAGARQGTRAQKTRSEVSGGGAKPWRQKGTGRARAGTIRSPIWRSGGVTFAAKPQDHSLKVNKKMYRGALKSILSELVRQDRLIVVEDFSIEAPKTKELVAKLKELELNDVLIVTGEVDENLFLAARNLYKVDARDVAGIDPVSLVAFNKVLMTAAAVKQVEEMLA.

The disordered stretch occupies residues 43-65 (RAQKTRSEVSGGGAKPWRQKGTG).

Belongs to the universal ribosomal protein uL4 family. As to quaternary structure, part of the 50S ribosomal subunit.

Functionally, one of the primary rRNA binding proteins, this protein initially binds near the 5'-end of the 23S rRNA. It is important during the early stages of 50S assembly. It makes multiple contacts with different domains of the 23S rRNA in the assembled 50S subunit and ribosome. In terms of biological role, forms part of the polypeptide exit tunnel. The protein is Large ribosomal subunit protein uL4 of Aliivibrio salmonicida (strain LFI1238) (Vibrio salmonicida (strain LFI1238)).